The following is a 473-amino-acid chain: Probable glycine dehydrogenase (decarboxylating) subunit 2 (473 aa).

N6-(pyridoxal phosphate)lysine is present on lysine 266.

The protein belongs to the GcvP family. C-terminal subunit subfamily. As to quaternary structure, the glycine cleavage system is composed of four proteins: P, T, L and H. In this organism, the P 'protein' is a heterodimer of two subunits. Requires pyridoxal 5'-phosphate as cofactor.

The catalysed reaction is N(6)-[(R)-lipoyl]-L-lysyl-[glycine-cleavage complex H protein] + glycine + H(+) = N(6)-[(R)-S(8)-aminomethyldihydrolipoyl]-L-lysyl-[glycine-cleavage complex H protein] + CO2. Functionally, the glycine cleavage system catalyzes the degradation of glycine. The P protein binds the alpha-amino group of glycine through its pyridoxal phosphate cofactor; CO(2) is released and the remaining methylamine moiety is then transferred to the lipoamide cofactor of the H protein. This chain is Probable glycine dehydrogenase (decarboxylating) subunit 2, found in Thermus thermophilus (strain ATCC BAA-163 / DSM 7039 / HB27).